The following is a 240-amino-acid chain: 14-3-3 protein 3 (240 aa).

This sequence belongs to the 14-3-3 family. In terms of assembly, interacts with coactosin. Interacts with ACTO/actophorin.

It localises to the cytoplasm. The protein resides in the cell projection. It is found in the phagocytic cup. In terms of biological role, adapter protein which is required for phagocytosis and motility, probably by regulating actin cytoskeleton dynamics. During phagocytosis, plays a role in the initiation and/or formation of the phagocytic cup and is involved in the recruitment of the actin binding protein coactosin to the phagocytic cup. The protein is 14-3-3 protein 3 of Entamoeba histolytica (strain ATCC 30459 / HM-1:IMSS / ABRM).